Consider the following 786-residue polypeptide: Neprilysin-3 (786 aa).

The Cytoplasmic portion of the chain corresponds to 1 to 52 (MTRYKQTEFTEDDSSSIGGIQLNEATGHTGMQIRYHTARATWNWRSRNKTEK). Residues 53 to 73 (WLLITTFVMAITIFTLLIVLF) form a helical; Signal-anchor for type II membrane protein membrane-spanning segment. Over 74 to 786 (TDGGSSDATK…MNPTEKCEVW (713 aa)) the chain is Extracellular. The 685-residue stretch at 102 to 786 (PCLNKHCIFA…MNPTEKCEVW (685 aa)) folds into the Peptidase M13 domain. 5 disulfide bridges follow: cysteine 103-cysteine 108, cysteine 126-cysteine 771, cysteine 134-cysteine 731, cysteine 190-cysteine 450, and cysteine 659-cysteine 783. 10 N-linked (GlcNAc...) asparagine glycosylation sites follow: asparagine 216, asparagine 226, asparagine 256, asparagine 279, asparagine 305, asparagine 325, asparagine 356, asparagine 388, asparagine 496, and asparagine 569. Histidine 622 contacts Zn(2+). Residue glutamate 623 is part of the active site. Residues histidine 626 and glutamate 682 each contribute to the Zn(2+) site. The active-site Proton donor is the aspartate 686. Residue asparagine 715 is glycosylated (N-linked (GlcNAc...) asparagine).

This sequence belongs to the peptidase M13 family. Zn(2+) is required as a cofactor.

The protein localises to the cell membrane. The catalysed reaction is Preferential cleavage of polypeptides between hydrophobic residues, particularly with Phe or Tyr at P1'.. Its function is as follows. Metalloendoprotease which is required in the dorsal paired medial neurons for the proper formation of long-term (LTM) and middle-term memories (MTM). Also required in the mushroom body neurons where it functions redundantly with neprilysins Nep2 and Nep4 in normal LTM formation. The sequence is that of Neprilysin-3 from Drosophila melanogaster (Fruit fly).